The following is a 288-amino-acid chain: Lipoyl synthase (288 aa).

Residues Cys-39, Cys-44, Cys-50, Cys-65, Cys-69, Cys-72, and Ser-276 each contribute to the [4Fe-4S] cluster site. In terms of domain architecture, Radical SAM core spans 51-265; sequence WGKGTATFMI…KETGLKKGFE (215 aa).

The protein belongs to the radical SAM superfamily. Lipoyl synthase family. It depends on [4Fe-4S] cluster as a cofactor.

Its subcellular location is the cytoplasm. The catalysed reaction is [[Fe-S] cluster scaffold protein carrying a second [4Fe-4S](2+) cluster] + N(6)-octanoyl-L-lysyl-[protein] + 2 oxidized [2Fe-2S]-[ferredoxin] + 2 S-adenosyl-L-methionine + 4 H(+) = [[Fe-S] cluster scaffold protein] + N(6)-[(R)-dihydrolipoyl]-L-lysyl-[protein] + 4 Fe(3+) + 2 hydrogen sulfide + 2 5'-deoxyadenosine + 2 L-methionine + 2 reduced [2Fe-2S]-[ferredoxin]. The protein operates within protein modification; protein lipoylation via endogenous pathway; protein N(6)-(lipoyl)lysine from octanoyl-[acyl-carrier-protein]: step 2/2. In terms of biological role, catalyzes the radical-mediated insertion of two sulfur atoms into the C-6 and C-8 positions of the octanoyl moiety bound to the lipoyl domains of lipoate-dependent enzymes, thereby converting the octanoylated domains into lipoylated derivatives. The chain is Lipoyl synthase from Bacteroides fragilis (strain YCH46).